Reading from the N-terminus, the 324-residue chain is Aldo-keto reductase family 1 member A1 (324 aa).

Ser3 is modified (phosphoserine). NADP(+) is bound by residues Gly10–Gly19, Thr20, and Trp21. The residue at position 37 (Ser37) is a Phosphoserine. Asp44 serves as a coordination point for NADP(+). Tyr49 serves as the catalytic Proton donor. Lys126 carries the post-translational modification N6-acetyllysine; alternate. N6-succinyllysine; alternate is present on Lys126. N6-succinyllysine is present on Lys144. The NADP(+) site is built by Ser161, Asn162, Ser210, Leu212, Ser214, Ser215, Lys262, Ser263, Ile264, Thr265, Arg268, Gln271, and Asn272. Ser210 carries the post-translational modification Phosphoserine.

Belongs to the aldo/keto reductase family.

Its subcellular location is the cytoplasm. It localises to the cytosol. The protein resides in the apical cell membrane. The catalysed reaction is a primary alcohol + NADP(+) = an aldehyde + NADPH + H(+). The enzyme catalyses L-gulonate + NADP(+) = aldehydo-D-glucuronate + NADPH + H(+). It carries out the reaction L-gulono-1,4-lactone + NADP(+) = D-glucurono-3,6-lactone + NADPH + H(+). It catalyses the reaction allyl alcohol + NADP(+) = acrolein + NADPH + H(+). The catalysed reaction is glycerol + NADP(+) = D-glyceraldehyde + NADPH + H(+). The enzyme catalyses glycerol + NADP(+) = L-glyceraldehyde + NADPH + H(+). It carries out the reaction hydroxyacetone + NADP(+) = methylglyoxal + NADPH + H(+). It catalyses the reaction 3-deoxyfructose + NADP(+) = 3-deoxyglucosone + NADPH + H(+). The catalysed reaction is (R)-mevalonate + NADP(+) = (R)-mevaldate + NADPH + H(+). The enzyme catalyses S-nitroso-CoA + NADPH + H(+) = sulfinamide-CoA + NADP(+). It carries out the reaction S-nitrosoglutathione + NADPH + H(+) = S-(hydroxysulfenamide)glutathione + NADP(+). Its function is as follows. Catalyzes the NADPH-dependent reduction of a wide variety of carbonyl-containing compounds to their corresponding alcohols. Displays enzymatic activity towards endogenous metabolites such as aromatic and aliphatic aldehydes, ketones, monosaccharides and bile acids, with a preference for negatively charged substrates, such as glucuronate and succinic semialdehyde. Plays an important role by catalyzing the reduction of D-glucuronic acid and D-glucurono-gamma-lactone. Functions as a detoxifiying enzyme by reducing a range of toxic aldehydes. Reduces methylglyoxal and 3-deoxyglucosone, which are present at elevated levels under hyperglycemic conditions and are cytotoxic. Involved also in the detoxification of lipid-derived aldehydes like acrolein. Plays a role in the activation of procarcinogens, such as polycyclic aromatic hydrocarbon trans-dihydrodiols, and in the metabolism of various xenobiotics and drugs. Also acts as an inhibitor of protein S-nitrosylation by mediating degradation of S-nitroso-coenzyme A (S-nitroso-CoA), a cofactor required to S-nitrosylate proteins. S-nitroso-CoA reductase activity is involved in reprogramming intermediary metabolism in renal proximal tubules, notably by inhibiting protein S-nitrosylation of isoform 2 of PKM (PKM2). Also acts as a S-nitroso-glutathione reductase by catalyzing the NADPH-dependent reduction of S-nitrosoglutathione. Displays no reductase activity towards retinoids. The sequence is that of Aldo-keto reductase family 1 member A1 (AKR1A1) from Cricetulus griseus (Chinese hamster).